Consider the following 137-residue polypeptide: Large ribosomal subunit protein uL16 (137 aa).

The protein belongs to the universal ribosomal protein uL16 family. Part of the 50S ribosomal subunit.

Its function is as follows. Binds 23S rRNA and is also seen to make contacts with the A and possibly P site tRNAs. In Azotobacter vinelandii (strain DJ / ATCC BAA-1303), this protein is Large ribosomal subunit protein uL16.